The following is a 475-amino-acid chain: MALYGKKTDLSSASSGGYTGVADVYQLWHYHARGNGNIGDKPSYTLEQARDQITRGNITWNGEKVFGKSAALTYSFLQSVADSDMPDNFKGFVKFNAAQIQQTKLALQSWADVANVTFSEAKDGERATIQFGNYTLTPDGNTDNNSQAFGFYPGNWKWAGSAWFNYNQADNQRPDINEFGRNTLTHEIGHTLGLYHPGDYDASDGNPGYKDVTYAEDTRQFSIMSYWNEGYTGGDFHGYHAAAPHDIAAIQKLYGANMSTRTGDTVYGFHSNSGRDFYTATDSKTPLIFSVWDAGGNDTFDFSGYSANQRISLISGTFSDVGGLKAMVSIAAGAVIENAIGGSGHDVIVGNLSDNRIDGGAGNDVLYGDGGADILTGGAGKDIFVYAWEKDSLSSAPDTITDFQRGEDRIDLSAFNKNHDLRFVDNFSGKGNEVVLNWDSQSHQTNMWLHLSGHETADFLVNIVGAALQPSDVIV.

Positions 1–14 are excised as a propeptide; that stretch reads MALYGKKTDLSSAS. His-186 is a binding site for Zn(2+). Glu-187 is a catalytic residue. Zn(2+) contacts are provided by His-190 and Tyr-226. Ca(2+) is bound by residues Arg-261, Gly-263, Thr-265, Asp-293, Gly-295, Gly-296, Asp-298, Glu-337, Gly-342, Gly-344, Asp-346, Asn-351, Asn-355, Gly-359, Gly-360, Ala-361, Gly-362, Asp-364, Gly-368, Gly-370, Gly-371, Asp-373, Gly-377, Gly-378, Ala-379, Gly-380, Asp-382, Asp-391, Asp-398, and Asp-408. Hemolysin-type calcium-binding repeat units follow at residues 340-357 and 358-375; these read IGGSGHDVIVGNLSDNRI and DGGAGNDVLYGDGGADIL.

It belongs to the peptidase M10B family. Requires Ca(2+) as cofactor. Zn(2+) is required as a cofactor.

It is found in the secreted. It carries out the reaction Preferential cleavage of bonds with hydrophobic residues in P1'.. This is Serralysin G (prtG) from Dickeya chrysanthemi (Pectobacterium chrysanthemi).